The sequence spans 128 residues: UPF0325 protein CKO_03204 (128 aa).

The protein belongs to the UPF0325 family.

The chain is UPF0325 protein CKO_03204 from Citrobacter koseri (strain ATCC BAA-895 / CDC 4225-83 / SGSC4696).